A 311-amino-acid chain; its full sequence is Aurora kinase (311 aa).

One can recognise a Protein kinase domain in the interval 20-300 (FEIGRFLGRG…IEDILRHPFL (281 aa)). K49 is a binding site for ATP. Catalysis depends on D143, which acts as the Proton acceptor. Residues 189-216 (DFGWSVHHPTHGGRRRTQCGTLDYLPPE) form an activation loop region. T205 bears the Phosphothreonine; by autocatalysis mark. The Destruction (D)-box signature appears at 280–299 (MLIRSPEARISIEDILRHPF).

Belongs to the protein kinase superfamily. Ser/Thr protein kinase family. Aurora subfamily. Interacts with EB1 (via C-terminal residues 101-238). Post-translationally, phosphorylated in mitosis and cytokinesis. Activated by autophosphorylation at Thr-205.

The protein resides in the nucleus. It is found in the cytoplasm. Its subcellular location is the cytoskeleton. It localises to the microtubule organizing center. The protein localises to the centrosome. The protein resides in the spindle. It is found in the spindle pole. Its subcellular location is the nucleus membrane. It carries out the reaction L-seryl-[protein] + ATP = O-phospho-L-seryl-[protein] + ADP + H(+). It catalyses the reaction L-threonyl-[protein] + ATP = O-phospho-L-threonyl-[protein] + ADP + H(+). Its activity is regulated as follows. Activated by cell-cycle phase specific phosphorylation. Inhibited by ATP-competitive inhibitors N-[4-[[6-Methoxy-7-[3-(4-morpholinyl)propoxy]-4-quinazolinyl]amino]phenyl]benzamide (ZM447439) and cyclopropanecarboxylic acid-(3-(4-(3-trifluoromethylphenylamino)-pyrimidin-2-ylamino)-phenyl)-amide (CFPPA). Inhibition leads to reduced growth, increased cytokinesis, microtubular defects, and increased ploidy of the cells. Its function is as follows. Involved in regulation of the cell cycle. Required for mitotic cell division and cytokinesis. Based on its localization to centrosomes and spindle microtubules, as well as to various cytoskeletal components such as the median body, parental attachment disk, and anterior and posterior-lateral paraflagellar dense rods, may coordinate reorganization and segregation of tubulin-containing structures during mitosis and cytokinesis. May regulate microtubule disassembly by phosphorylating cytoskeletal proteins leading to their destabilization. Phosphorylates EB1 at 'Ser-148' in vitro. Phosphorylates histone H3 in vitro. The chain is Aurora kinase from Giardia intestinalis (strain ATCC 50803 / WB clone C6) (Giardia lamblia).